The following is a 267-amino-acid chain: MTEYNWNERHIITFPEEILALSTKDLHVYYGEKEAIKGIDMQFKKKKITALIGPSGCGKSTFLRSLNRMNDTIDIAKVTGQILFEGIDVNAANINVYEMRKHIGMVFQRPNPFAKSIYKNITFAYERAGVKDKQFLDDIVETSLKQAALWEQVKDDLHKSAFTLSGGQQQRLCIARAIAVKPDILLMDEPASALDPIATMQLEETMSELKENYTIIIVTHNMQQAARASDYTAFFYLGDLIEYDKTNNIFQNAKLQSTSDYVSGHFG.

The region spanning 21–262 (LSTKDLHVYY…AKLQSTSDYV (242 aa)) is the ABC transporter domain. 53-60 (GPSGCGKS) provides a ligand contact to ATP.

The protein belongs to the ABC transporter superfamily. Phosphate importer (TC 3.A.1.7) family. The complex is composed of two ATP-binding proteins (PstB), two transmembrane proteins (PstC and PstA) and a solute-binding protein (PstS).

The protein localises to the cell membrane. It catalyses the reaction phosphate(out) + ATP + H2O = ADP + 2 phosphate(in) + H(+). Its function is as follows. Part of the ABC transporter complex PstSACB involved in phosphate import. Responsible for energy coupling to the transport system. This is Phosphate import ATP-binding protein PstB 2 from Streptococcus mutans serotype c (strain ATCC 700610 / UA159).